The sequence spans 263 residues: Peptide methionine sulfoxide reductase A4, chloroplastic (263 aa).

The transit peptide at 1–75 (MPPLLASTSS…GLGGLGGSPR (75 aa)) directs the protein to the chloroplast.

The protein belongs to the MsrA Met sulfoxide reductase family. Expressed in roots, stems, leaves and flowers.

The protein resides in the plastid. The protein localises to the chloroplast. It carries out the reaction L-methionyl-[protein] + [thioredoxin]-disulfide + H2O = L-methionyl-(S)-S-oxide-[protein] + [thioredoxin]-dithiol. It catalyses the reaction [thioredoxin]-disulfide + L-methionine + H2O = L-methionine (S)-S-oxide + [thioredoxin]-dithiol. Its function is as follows. Catalyzes the reduction of methionine sulfoxide (MetSO) to methionine in proteins. Involved in abiotic and salt stress responses. Plays a protective role against oxidative stress by restoring activity to proteins that have been inactivated by methionine oxidation. MSRA family specifically reduces the MetSO S-enantiomer. This Oryza sativa subsp. japonica (Rice) protein is Peptide methionine sulfoxide reductase A4, chloroplastic.